Consider the following 967-residue polypeptide: Leucine--tRNA ligase (967 aa).

The 'HIGH' region signature appears at 43–53 (PYLSGHLHVGH). Positions 650–654 (KMSKS) match the 'KMSKS' region motif. ATP is bound at residue Lys-653.

Belongs to the class-I aminoacyl-tRNA synthetase family.

The protein localises to the cytoplasm. The catalysed reaction is tRNA(Leu) + L-leucine + ATP = L-leucyl-tRNA(Leu) + AMP + diphosphate. The sequence is that of Leucine--tRNA ligase from Pyrococcus abyssi (strain GE5 / Orsay).